A 310-amino-acid chain; its full sequence is Adenylyl-sulfate kinase 4, chloroplastic (310 aa).

The transit peptide at 1-75 directs the protein to the chloroplast; that stretch reads MDVAAMARCV…MAKDESISSR (75 aa). Residue 116–124 participates in ATP binding; the sequence is GLSGSGKSS. Residues D146, R149, R163, N166, 189–190, and G239 each bind substrate; that span reads IS. Residue S190 is the Phosphoserine intermediate of the active site.

This sequence belongs to the APS kinase family. As to quaternary structure, homodimer; disulfide-linked. As to expression, expressed in root vasculature, root tips, leaf epidermal and guard cells, pollen grains and radicle of immature seeds.

It localises to the plastid. The protein resides in the chloroplast. It catalyses the reaction adenosine 5'-phosphosulfate + ATP = 3'-phosphoadenylyl sulfate + ADP + H(+). The protein operates within sulfur metabolism; hydrogen sulfide biosynthesis; sulfite from sulfate: step 2/3. Functionally, catalyzes the phosphorylation of adenosine 5'-phosphosulfate to 3'-phosphoadenylyl sulfate, which is the activated sulfate form for sulfation reactions. Essential for plant reproduction and viability. This Arabidopsis thaliana (Mouse-ear cress) protein is Adenylyl-sulfate kinase 4, chloroplastic (APK4).